We begin with the raw amino-acid sequence, 379 residues long: Protein RecA (379 aa).

79-86 (GPESSGKT) contributes to the ATP binding site.

Belongs to the RecA family.

The protein localises to the cytoplasm. Its function is as follows. Can catalyze the hydrolysis of ATP in the presence of single-stranded DNA, the ATP-dependent uptake of single-stranded DNA by duplex DNA, and the ATP-dependent hybridization of homologous single-stranded DNAs. It interacts with LexA causing its activation and leading to its autocatalytic cleavage. The chain is Protein RecA from Streptococcus agalactiae serotype III (strain NEM316).